The primary structure comprises 493 residues: Alpha-amylase-related protein (493 aa).

An N-terminal signal peptide occupies residues 1–19; the sequence is MFKLALTLTLCLAGSLSLA. The residue at position 20 (glutamine 20) is a Pyrrolidone carboxylic acid. Cysteines 47 and 103 form a disulfide. Ca(2+)-binding residues include asparagine 117, glutamine 168, and aspartate 177. A disulfide bridge links cysteine 156 with cysteine 170. Arginine 205 serves as a coordination point for chloride. Aspartate 207 serves as the catalytic Nucleophile. Position 211 (histidine 211) interacts with Ca(2+). The active-site Proton donor is the glutamate 244. Chloride is bound by residues asparagine 307 and arginine 342. Cystine bridges form between cysteine 375–cysteine 381, cysteine 417–cysteine 440, and cysteine 447–cysteine 459.

The protein belongs to the glycosyl hydrolase 13 family. Monomer. Requires Ca(2+) as cofactor. Chloride serves as cofactor.

It is found in the secreted. The enzyme catalyses Endohydrolysis of (1-&gt;4)-alpha-D-glucosidic linkages in polysaccharides containing three or more (1-&gt;4)-alpha-linked D-glucose units.. In Drosophila yakuba (Fruit fly), this protein is Alpha-amylase-related protein (Amyrel).